We begin with the raw amino-acid sequence, 193 residues long: Capsid protein (193 aa).

Post-translationally, the N-terminus is blocked.

It localises to the virion. The polypeptide is Capsid protein (Crataegus (hawthorn)).